Consider the following 111-residue polypeptide: Cell division protein FtsB (111 aa).

At 1–3 (MGK) the chain is on the cytoplasmic side. The helical transmembrane segment at 4-21 (LTLLLLILLGWLQYSLWL) threads the bilayer. Over 22–111 (GKNGIHDYVR…TNTPSNNIQR (90 aa)) the chain is Periplasmic. Residues 33-63 (KDDVVVQQGNNAKLKDRNEQLFAEIDDLNGG) are a coiled coil. Positions 90-111 (ESNHRNANTAPSTNTPSNNIQR) are disordered. Low complexity predominate over residues 95–111 (NANTAPSTNTPSNNIQR).

The protein belongs to the FtsB family. Part of a complex composed of FtsB, FtsL and FtsQ.

Its subcellular location is the cell inner membrane. In terms of biological role, essential cell division protein. May link together the upstream cell division proteins, which are predominantly cytoplasmic, with the downstream cell division proteins, which are predominantly periplasmic. This Pectobacterium carotovorum subsp. carotovorum (strain PC1) protein is Cell division protein FtsB.